A 142-amino-acid polypeptide reads, in one-letter code: Large ribosomal subunit protein uL11 (142 aa).

The protein belongs to the universal ribosomal protein uL11 family. As to quaternary structure, part of the ribosomal stalk of the 50S ribosomal subunit. Interacts with L10 and the large rRNA to form the base of the stalk. L10 forms an elongated spine to which L12 dimers bind in a sequential fashion forming a multimeric L10(L12)X complex. In terms of processing, one or more lysine residues are methylated.

In terms of biological role, forms part of the ribosomal stalk which helps the ribosome interact with GTP-bound translation factors. The chain is Large ribosomal subunit protein uL11 from Shewanella amazonensis (strain ATCC BAA-1098 / SB2B).